The primary structure comprises 277 residues: uncharacterized protein (277 aa).

2 disordered regions span residues 33–168 and 210–277; these read KNDN…VTTR and NKLL…PIEF. Positions 34–45 are enriched in basic and acidic residues; the sequence is NDNDERTAHEES. Residues 86–99 show a composition bias toward basic residues; the sequence is LKSKSKRKTKKGGS. Basic and acidic residues-rich tracts occupy residues 100-113, 151-168, and 216-230; these read KPRE…KHIV, AKEL…VTTR, and TNED…NKEK. The span at 231–241 shows a compositional bias: basic residues; it reads DRKRRERRTAR. Basic and acidic residues predominate over residues 242–258; sequence RKDERKQEKKQEKKQDN. Residues 259 to 271 show a composition bias toward polar residues; it reads KTSQSFPSSTDMN.

Its subcellular location is the cytoplasm. This is an uncharacterized protein from Saccharomyces cerevisiae (strain ATCC 204508 / S288c) (Baker's yeast).